The chain runs to 264 residues: MSRIAGTFAELKHNSRKALVTFITAGDPDLAATEALIPLLAESGADIVELGVPFSDPMADGPTIQLSSERALAAGTTLPKILDMVRRVRTRCQVPIVLMGYYNPILIHGLERFAADASAAGVDGVLLVDLPPEEAAEFKACADRHGLDVIFLLTPTSDEGRIRKVARQARGFVYYVSVTGVTGARSGVEASVSSNVAAIREAITVPVVVGFGISTPDQAAQVAASADGVVVGSAIVKLFERFTAAELGREVATFVSALREAIGN.

Residues E49 and D60 each act as proton acceptor in the active site.

It belongs to the TrpA family. As to quaternary structure, tetramer of two alpha and two beta chains.

The enzyme catalyses (1S,2R)-1-C-(indol-3-yl)glycerol 3-phosphate + L-serine = D-glyceraldehyde 3-phosphate + L-tryptophan + H2O. The protein operates within amino-acid biosynthesis; L-tryptophan biosynthesis; L-tryptophan from chorismate: step 5/5. The alpha subunit is responsible for the aldol cleavage of indoleglycerol phosphate to indole and glyceraldehyde 3-phosphate. The chain is Tryptophan synthase alpha chain from Geobacter sulfurreducens (strain ATCC 51573 / DSM 12127 / PCA).